The following is a 313-amino-acid chain: MSDQKTQHLPTAIFVMGPTASGKTALSVALRQHLPVELISVDSALIYRGMDIGTAKPTTEEQALAPHRLINILDPSQPYSAADFCHDALKEMAEITASGRIPLLVGGTMLYFKALLEGLSPLPSANPVIRAQIEQQAAEQGWDALHQQLQKIDPAAALRIHPNDPQRLSRALEVFLISGKTLTELTTLSGESLPYRVHQFAIAPAKRELLHQRIEARFHQMLESGFEEEVKALYARHDLHVDLPSIRCVGYRQMWSYLSGEIDYDEMIYRGICATRQLAKRQITWLRGWKSVHWLDSSQPEQALSTVMQVVSA.

17-24 (GPTASGKT) is an ATP binding site. Position 19 to 24 (19 to 24 (TASGKT)) interacts with substrate. Interaction with substrate tRNA stretches follow at residues 42-45 (DSAL), 166-170 (QRLSR), 247-252 (RCVGYR), and 280-287 (KRQITWLR).

The protein belongs to the IPP transferase family. In terms of assembly, monomer. It depends on Mg(2+) as a cofactor.

The enzyme catalyses adenosine(37) in tRNA + dimethylallyl diphosphate = N(6)-dimethylallyladenosine(37) in tRNA + diphosphate. Functionally, catalyzes the transfer of a dimethylallyl group onto the adenine at position 37 in tRNAs that read codons beginning with uridine, leading to the formation of N6-(dimethylallyl)adenosine (i(6)A). This is tRNA dimethylallyltransferase from Photorhabdus laumondii subsp. laumondii (strain DSM 15139 / CIP 105565 / TT01) (Photorhabdus luminescens subsp. laumondii).